The following is a 275-amino-acid chain: Dermonecrotic toxin LhSicTox-alphaIV2 (275 aa).

H5 is an active-site residue. Positions 25 and 27 each coordinate Mg(2+). Residue H41 is the Nucleophile of the active site. Cystine bridges form between C45–C51 and C47–C192. D85 contacts Mg(2+).

This sequence belongs to the arthropod phospholipase D family. Class II subfamily. Requires Mg(2+) as cofactor. In terms of tissue distribution, expressed by the venom gland.

Its subcellular location is the secreted. The enzyme catalyses an N-(acyl)-sphingosylphosphocholine = an N-(acyl)-sphingosyl-1,3-cyclic phosphate + choline. It carries out the reaction an N-(acyl)-sphingosylphosphoethanolamine = an N-(acyl)-sphingosyl-1,3-cyclic phosphate + ethanolamine. The catalysed reaction is a 1-acyl-sn-glycero-3-phosphocholine = a 1-acyl-sn-glycero-2,3-cyclic phosphate + choline. It catalyses the reaction a 1-acyl-sn-glycero-3-phosphoethanolamine = a 1-acyl-sn-glycero-2,3-cyclic phosphate + ethanolamine. Its function is as follows. Dermonecrotic toxins cleave the phosphodiester linkage between the phosphate and headgroup of certain phospholipids (sphingolipid and lysolipid substrates), forming an alcohol (often choline) and a cyclic phosphate. This toxin acts on sphingomyelin (SM). It may also act on ceramide phosphoethanolamine (CPE), lysophosphatidylcholine (LPC) and lysophosphatidylethanolamine (LPE), but not on lysophosphatidylserine (LPS), and lysophosphatidylglycerol (LPG). It acts by transphosphatidylation, releasing exclusively cyclic phosphate products as second products. Induces dermonecrosis, hemolysis, increased vascular permeability, edema, inflammatory response, and platelet aggregation. The chain is Dermonecrotic toxin LhSicTox-alphaIV2 from Loxosceles hirsuta (Recluse spider).